The following is a 287-amino-acid chain: Energy-coupling factor transporter ATP-binding protein EcfA1 (287 aa).

An ABC transporter domain is found at 6–248 (IVAEGVSYAY…ADRIRALRLD (243 aa)). 47–54 (GMNGSGKS) lines the ATP pocket.

This sequence belongs to the ABC transporter superfamily. Energy-coupling factor EcfA family. Forms a stable energy-coupling factor (ECF) transporter complex composed of 2 membrane-embedded substrate-binding proteins (S component), 2 ATP-binding proteins (A component) and 2 transmembrane proteins (T component).

The protein localises to the cell membrane. Functionally, ATP-binding (A) component of a common energy-coupling factor (ECF) ABC-transporter complex. Unlike classic ABC transporters this ECF transporter provides the energy necessary to transport a number of different substrates. In Symbiobacterium thermophilum (strain DSM 24528 / JCM 14929 / IAM 14863 / T), this protein is Energy-coupling factor transporter ATP-binding protein EcfA1.